The following is a 264-amino-acid chain: Synaptophysin-like protein 2 (264 aa).

Residues M1–E33 lie on the Cytoplasmic side of the membrane. In terms of domain architecture, MARVEL spans R30–P238. The chain crosses the membrane as a helical span at residues P34 to G54. Residues S55–E116 are Vesicular-facing. Residues F117–L137 traverse the membrane as a helical segment. At R138–P150 the chain is on the cytoplasmic side. The chain crosses the membrane as a helical span at residues L151–W171. Over G172–N213 the chain is Vesicular. The N-linked (GlcNAc...) asparagine glycan is linked to N213. Residues I214–F234 form a helical membrane-spanning segment. At K235–Q264 the chain is on the cytoplasmic side. The tract at residues Q242 to Q264 is disordered.

It belongs to the synaptophysin/synaptobrevin family. Skeletal muscle.

It localises to the membrane. Functionally, involved in communication between the T-tubular and junctional sarcoplasmic reticulum (SR) membranes. The chain is Synaptophysin-like protein 2 (SYPL2) from Oryctolagus cuniculus (Rabbit).